We begin with the raw amino-acid sequence, 548 residues long: Chaperonin GroEL (548 aa).

ATP is bound by residues 29-32 (TLGP), lysine 50, 86-90 (DGTTT), glycine 416, and aspartate 497.

The protein belongs to the chaperonin (HSP60) family. As to quaternary structure, forms a cylinder of 14 subunits composed of two heptameric rings stacked back-to-back. Interacts with the co-chaperonin GroES.

It localises to the cytoplasm. The enzyme catalyses ATP + H2O + a folded polypeptide = ADP + phosphate + an unfolded polypeptide.. In terms of biological role, together with its co-chaperonin GroES, plays an essential role in assisting protein folding. The GroEL-GroES system forms a nano-cage that allows encapsulation of the non-native substrate proteins and provides a physical environment optimized to promote and accelerate protein folding. The chain is Chaperonin GroEL from Neorickettsia sennetsu (strain ATCC VR-367 / Miyayama) (Ehrlichia sennetsu).